Reading from the N-terminus, the 528-residue chain is Phosphoenolpyruvate carboxykinase (ATP) (528 aa).

Positions 56, 192, and 198 each coordinate substrate. Residues Lys198, His217, and 233–241 (GLSGTGKTT) each bind ATP. 2 residues coordinate Mn(2+): Lys198 and His217. Asp254 provides a ligand contact to Mn(2+). ATP is bound by residues Glu282, Arg319, and Thr444. Arg319 provides a ligand contact to substrate.

This sequence belongs to the phosphoenolpyruvate carboxykinase (ATP) family. The cofactor is Mn(2+).

The protein resides in the cytoplasm. The enzyme catalyses oxaloacetate + ATP = phosphoenolpyruvate + ADP + CO2. The protein operates within carbohydrate biosynthesis; gluconeogenesis. Functionally, involved in the gluconeogenesis. Catalyzes the conversion of oxaloacetate (OAA) to phosphoenolpyruvate (PEP) through direct phosphoryl transfer between the nucleoside triphosphate and OAA. This is Phosphoenolpyruvate carboxykinase (ATP) from Lysinibacillus sphaericus (strain C3-41).